The chain runs to 92 residues: Small ribosomal subunit protein bS18 (92 aa).

This sequence belongs to the bacterial ribosomal protein bS18 family. As to quaternary structure, part of the 30S ribosomal subunit. Forms a tight heterodimer with protein bS6.

Binds as a heterodimer with protein bS6 to the central domain of the 16S rRNA, where it helps stabilize the platform of the 30S subunit. The protein is Small ribosomal subunit protein bS18 of Ralstonia nicotianae (strain ATCC BAA-1114 / GMI1000) (Ralstonia solanacearum).